The following is a 519-amino-acid chain: Methionine--tRNA ligase (519 aa).

Positions 11–21 match the 'HIGH' region motif; the sequence is AYPNAAPHVGH. The 'KMSKS' region signature appears at 299-303; it reads KMSKS. An ATP-binding site is contributed by lysine 302. Residues 500-519 form a disordered region; it reads LPPPTGVFPRYQPPQPPEGK.

The protein belongs to the class-I aminoacyl-tRNA synthetase family. MetG type 2B subfamily. In terms of assembly, monomer.

It is found in the cytoplasm. The catalysed reaction is tRNA(Met) + L-methionine + ATP = L-methionyl-tRNA(Met) + AMP + diphosphate. Functionally, is required not only for elongation of protein synthesis but also for the initiation of all mRNA translation through initiator tRNA(fMet) aminoacylation. The chain is Methionine--tRNA ligase from Mycobacterium tuberculosis (strain ATCC 25618 / H37Rv).